Here is a 326-residue protein sequence, read N- to C-terminus: Fructokinase (326 aa).

The disordered stretch occupies residues 275 to 326 (EQALRNGPDPRRQSRRRHRLPRRRQSTLGARDWSLRLEQDSDPHPPDDTFSP). Basic residues predominate over residues 287-299 (QSRRRHRLPRRRQ). The segment covering 307–326 (WSLRLEQDSDPHPPDDTFSP) has biased composition (basic and acidic residues).

Belongs to the carbohydrate kinase PfkB family.

The catalysed reaction is D-fructose + ATP = D-fructose 6-phosphate + ADP + H(+). The polypeptide is Fructokinase (frk) (Rhizobium leguminosarum bv. trifolii).